We begin with the raw amino-acid sequence, 469 residues long: Citrate synthase, mitochondrial (469 aa).

A mitochondrion-targeting transit peptide spans 1 to 30 (MSFLSVSRLAPKLLNSKNATYFLVAARNAS). Residues His304 and His350 contribute to the active site. Residue Arg359 participates in oxaloacetate binding. Asp405 is an active-site residue. Residues Arg431 and Arg451 each coordinate oxaloacetate.

The protein belongs to the citrate synthase family. In terms of assembly, homodimer.

The protein localises to the mitochondrion matrix. The enzyme catalyses oxaloacetate + acetyl-CoA + H2O = citrate + CoA + H(+). It participates in carbohydrate metabolism; tricarboxylic acid cycle; isocitrate from oxaloacetate: step 1/2. Key enzyme of the Krebs tricarboxylic acid cycle which catalyzes the synthesis of citrate from acetyl coenzyme A and oxaloacetate. The protein is Citrate synthase, mitochondrial (cs) of Thunnus albacares (Yellowfin tuna).